The chain runs to 344 residues: MGQKVHPYGFRLGFNKPWRSRWFAKQGYAKLLQEDLELKAALRERLKSAGVSSIEVDRPGNKLRVTIRTSRPGIIIGRKGAEIEKLKQDMAKKTKREVFIDIQEVHKPELDAQLVSESIALQLEKRVAFRRAMRKAVDSALRFGCKGIKVRVSGRLNGAEIARSEWYLQGQLPLHTLRADIDYGFAEAHTTYGVIGIKAWLYKGEILDLTKRRNLLPEPEPRREQRRDRPDRRDRDGRGGDRDRGGDRGGYRGGDRGDRPPVQSAPPVEATGPAVQTPPSDLPRPAARPVAPILPPLMAPQQPSWKQEVRQDTPSAEGAPEAKPAADENNPGTEQKPEGSGENQ.

Residues 38 to 106 enclose the KH type-2 domain; it reads LKAALRERLK…EVFIDIQEVH (69 aa). Residues 217–344 are disordered; that stretch reads PEPEPRREQR…QKPEGSGENQ (128 aa). Composition is skewed to basic and acidic residues over residues 219–259 and 335–344; these read PEPR…RGDR and QKPEGSGENQ.

This sequence belongs to the universal ribosomal protein uS3 family. Part of the 30S ribosomal subunit. Forms a tight complex with proteins S10 and S14.

In terms of biological role, binds the lower part of the 30S subunit head. Binds mRNA in the 70S ribosome, positioning it for translation. This chain is Small ribosomal subunit protein uS3, found in Solibacter usitatus (strain Ellin6076).